A 350-amino-acid chain; its full sequence is Phenylalanine--tRNA ligase alpha subunit (350 aa).

A Mg(2+)-binding site is contributed by Glu259.

Belongs to the class-II aminoacyl-tRNA synthetase family. Phe-tRNA synthetase alpha subunit type 1 subfamily. Tetramer of two alpha and two beta subunits. It depends on Mg(2+) as a cofactor.

It is found in the cytoplasm. It catalyses the reaction tRNA(Phe) + L-phenylalanine + ATP = L-phenylalanyl-tRNA(Phe) + AMP + diphosphate + H(+). The polypeptide is Phenylalanine--tRNA ligase alpha subunit (Rickettsia typhi (strain ATCC VR-144 / Wilmington)).